The chain runs to 58 residues: Potassium channel toxin alpha-KTx 16.6 (58 aa).

Residues 1 to 22 (MKILSVLLIALIICSINICSEA) form the signal peptide. 3 disulfides stabilise this stretch: cysteine 29/cysteine 50, cysteine 35/cysteine 55, and cysteine 39/cysteine 57.

It belongs to the short scorpion toxin superfamily. Potassium channel inhibitor family. Alpha-KTx 16 subfamily. Expressed by the venom gland.

The protein resides in the secreted. Functionally, inhibits potassium channel. In Buthus israelis (Israeli scorpion), this protein is Potassium channel toxin alpha-KTx 16.6.